The following is a 597-amino-acid chain: Kelch-like protein 21 (597 aa).

Positions leucine 35 to glycine 103 constitute a BTB domain. The BACK domain occupies cysteine 138–glutamate 239. 6 Kelch repeats span residues isoleucine 287–asparagine 335, aspartate 336–glycine 382, leucine 384–glycine 422, arginine 423–glycine 470, methionine 472–glycine 512, and lysine 513–arginine 560. Positions glycine 570–histidine 597 are disordered.

In terms of assembly, component of the BCR(KLHL21) E3 ubiquitin ligase complex, at least composed of CUL3, KLHL21 and RBX1.

It localises to the cytoplasm. The protein localises to the cytoskeleton. The protein resides in the spindle. It participates in protein modification; protein ubiquitination. Substrate-specific adapter of a BCR (BTB-CUL3-RBX1) E3 ubiquitin-protein ligase complex required for efficient chromosome alignment and cytokinesis. The BCR(KLHL21) E3 ubiquitin ligase complex regulates localization of the chromosomal passenger complex (CPC) from chromosomes to the spindle midzone in anaphase and mediates the ubiquitination of AURKB. Ubiquitination of AURKB by BCR(KLHL21) E3 ubiquitin ligase complex may not lead to its degradation by the proteasome. This chain is Kelch-like protein 21 (Klhl21), found in Mus musculus (Mouse).